The chain runs to 159 residues: 2-C-methyl-D-erythritol 2,4-cyclodiphosphate synthase (159 aa).

Asp-10 and His-12 together coordinate a divalent metal cation. 4-CDP-2-C-methyl-D-erythritol 2-phosphate contacts are provided by residues Asp-10–His-12 and His-36–Ser-37. His-44 serves as a coordination point for a divalent metal cation. 4-CDP-2-C-methyl-D-erythritol 2-phosphate contacts are provided by residues Asp-58–Gly-60, Phe-63–Asp-67, Ala-102–Ala-108, Thr-134–Glu-137, Phe-141, and Arg-144.

This sequence belongs to the IspF family. In terms of assembly, homotrimer. Requires a divalent metal cation as cofactor.

It carries out the reaction 4-CDP-2-C-methyl-D-erythritol 2-phosphate = 2-C-methyl-D-erythritol 2,4-cyclic diphosphate + CMP. Its pathway is isoprenoid biosynthesis; isopentenyl diphosphate biosynthesis via DXP pathway; isopentenyl diphosphate from 1-deoxy-D-xylulose 5-phosphate: step 4/6. Functionally, involved in the biosynthesis of isopentenyl diphosphate (IPP) and dimethylallyl diphosphate (DMAPP), two major building blocks of isoprenoid compounds. Catalyzes the conversion of 4-diphosphocytidyl-2-C-methyl-D-erythritol 2-phosphate (CDP-ME2P) to 2-C-methyl-D-erythritol 2,4-cyclodiphosphate (ME-CPP) with a corresponding release of cytidine 5-monophosphate (CMP). This is 2-C-methyl-D-erythritol 2,4-cyclodiphosphate synthase from Shewanella frigidimarina (strain NCIMB 400).